The following is a 524-amino-acid chain: 2-isopropylmalate synthase (524 aa).

One can recognise a Pyruvate carboxyltransferase domain in the interval 15–275 (VVVFDTTMRD…PYGTSVDPVH (261 aa)). Residues Asp24, His212, His214, and Asn248 each contribute to the Mn(2+) site. The regulatory domain stretch occupies residues 401–524 (RVSRLRVVAG…RPEAAIASGF (124 aa)).

This sequence belongs to the alpha-IPM synthase/homocitrate synthase family. LeuA type 1 subfamily. Homodimer. The cofactor is Mn(2+).

The protein resides in the cytoplasm. It carries out the reaction 3-methyl-2-oxobutanoate + acetyl-CoA + H2O = (2S)-2-isopropylmalate + CoA + H(+). Its pathway is amino-acid biosynthesis; L-leucine biosynthesis; L-leucine from 3-methyl-2-oxobutanoate: step 1/4. Catalyzes the condensation of the acetyl group of acetyl-CoA with 3-methyl-2-oxobutanoate (2-ketoisovalerate) to form 3-carboxy-3-hydroxy-4-methylpentanoate (2-isopropylmalate). In Caulobacter vibrioides (strain ATCC 19089 / CIP 103742 / CB 15) (Caulobacter crescentus), this protein is 2-isopropylmalate synthase.